The chain runs to 284 residues: GPN-loop GTPase 3 (284 aa).

13–18 (GSGKST) serves as a coordination point for GTP. Residues 72–74 (GPN) carry the Gly-Pro-Asn (GPN)-loop; involved in dimer interface motif. 174–177 (TKMD) is a GTP binding site.

This sequence belongs to the GPN-loop GTPase family. As to quaternary structure, heterodimer with GPN1. Binds to RNA polymerase II (RNAPII). Interacts directly with subunits RPB4 and RPB7 and the CTD of RPB1.

Its function is as follows. Small GTPase required for proper localization of RNA polymerase II (RNAPII). May act at an RNAP assembly step prior to nuclear import. This Homo sapiens (Human) protein is GPN-loop GTPase 3.